We begin with the raw amino-acid sequence, 563 residues long: Quinidine resistance protein 1 (563 aa).

Polar residues predominate over residues 1-10 (MTKQQTSVMR). Residues 1 to 50 (MTKQQTSVMRNASIAKEEREGSDNNNVDRSSSDAISDNDAERSNSHSEID) are disordered. The Cytoplasmic segment spans residues 1-75 (MTKQQTSVMR…KQKMLLVVQC (75 aa)). Residues 23–33 (DNNNVDRSSSD) show a composition bias toward low complexity. The span at 39–49 (DAERSNSHSEI) shows a compositional bias: basic and acidic residues. The helical transmembrane segment at 76-96 (AFTGFFSTVAGSIYYPVLTII) threads the bilayer. Over 97–108 (ERKFNITEELAN) the chain is Extracellular. A helical transmembrane segment spans residues 109-129 (VTIVVYFIFQGVAPSIMGGLA). At 130 to 135 (DTFGRR) the chain is on the cytoplasmic side. The helical transmembrane segment at 136–156 (PIVLWAILAYFCACIGLACAH) threads the bilayer. The Extracellular portion of the chain corresponds to 157 to 165 (NYAQILALR). A helical transmembrane segment spans residues 166–186 (CLQAAGISPVIAINSGIMGDV). Topologically, residues 187 to 195 (TTKVERGGY) are cytoplasmic. A helical transmembrane segment spans residues 196–216 (VGLVAGFQVVGTAFGALIGAG). Over 217 to 224 (LSSKWGWR) the chain is Extracellular. A helical transmembrane segment spans residues 225-245 (AIFWFLAIGSGICLVFSTLLM). At 246 to 296 (PETKRTLVGNGSVTPRSFLNRSLILHVGSVKKTLHLDDPDPETLEPRTSVD) the chain is on the cytoplasmic side. Residues 297–317 (FLAPLKILHIREIDILLSIAG) traverse the membrane as a helical segment. Residues 318–341 (LQFSTWTTHQTALTIVLSKKYNLS) lie on the Extracellular side of the membrane. The chain crosses the membrane as a helical span at residues 342 to 362 (VAKIGLCFLPAGISTLTSIIS). Residues 363–421 (AGRYLNWSYRTRKVKYNRWIKEQELQLMEKYKGDKNKVAELIHSNSHYAFNLVEARLHP) lie on the Cytoplasmic side of the membrane. The helical transmembrane segment at 422 to 442 (AFVTLLLSSIGFTAFGWCISV) threads the bilayer. Residues 443-445 (KTP) are Extracellular-facing. Residues 446-466 (LAAVLCTSAFASLFSNCILTF) traverse the membrane as a helical segment. At 467–481 (STTLIVDLFPSKAST) the chain is on the cytoplasmic side. A helical transmembrane segment spans residues 482-502 (ATGCLNLFRCLLSAIFIAALT). The Extracellular segment spans residues 503–511 (KMVEKMRYG). A helical membrane pass occupies residues 512-532 (GVFTFLSAITSSSSLLLFYLL). Residues 533–563 (KNGKQLSFDRIRANDKSAGRSVGKNSEKVST) are Cytoplasmic-facing.

Belongs to the major facilitator superfamily. CAR1 family.

Its subcellular location is the cell membrane. In terms of biological role, multidrug resistance transporter involved in resistance and adaptation to quinidine and ketoconazole. The sequence is that of Quinidine resistance protein 1 (QDR1) from Saccharomyces cerevisiae (strain ATCC 204508 / S288c) (Baker's yeast).